We begin with the raw amino-acid sequence, 1016 residues long: DNA polymerase I (1016 aa).

One can recognise a 5'-3' exonuclease domain in the interval 1-308; sequence MPNSIWTSSD…MEFTTLTRRV (308 aa). The tract at residues 334–361 is disordered; it reads GPDLDAAEPEPVAGGIPEVSGESVPMPP. One can recognise a 3'-5' exonuclease domain in the interval 394–630; that stretch reads SAYVTIRDLV…MEARGITVDR (237 aa). The segment at 768–1016 is polymerase; the sequence is GRKIRTAFIS…RAATNWDEAH (249 aa).

This sequence belongs to the DNA polymerase type-A family. In terms of assembly, single-chain monomer with multiple functions.

The catalysed reaction is DNA(n) + a 2'-deoxyribonucleoside 5'-triphosphate = DNA(n+1) + diphosphate. In terms of biological role, in addition to polymerase activity, this DNA polymerase exhibits 3'-5' and 5'-3' exonuclease activity. The sequence is that of DNA polymerase I (polA) from Rhizobium leguminosarum.